A 523-amino-acid polypeptide reads, in one-letter code: ATP synthase subunit alpha (523 aa).

Position 179–186 (179–186) interacts with ATP; the sequence is GDRQTGKT.

It belongs to the ATPase alpha/beta chains family. As to quaternary structure, F-type ATPases have 2 components, CF(1) - the catalytic core - and CF(0) - the membrane proton channel. CF(1) has five subunits: alpha(3), beta(3), gamma(1), delta(1), epsilon(1). CF(0) has three main subunits: a(1), b(2) and c(9-12). The alpha and beta chains form an alternating ring which encloses part of the gamma chain. CF(1) is attached to CF(0) by a central stalk formed by the gamma and epsilon chains, while a peripheral stalk is formed by the delta and b chains.

It is found in the cell inner membrane. It catalyses the reaction ATP + H2O + 4 H(+)(in) = ADP + phosphate + 5 H(+)(out). Its function is as follows. Produces ATP from ADP in the presence of a proton gradient across the membrane. The alpha chain is a regulatory subunit. This chain is ATP synthase subunit alpha, found in Vibrio vulnificus (strain YJ016).